The primary structure comprises 87 residues: Lantipeptide prochlorosin 3.3 (87 aa).

Positions 1–64 are excised as a propeptide; that stretch reads MSEEQLKAFI…DEELEAASGG (64 aa). Residue T67 is modified to 2,3-didehydrobutyrine. A cross-link (beta-methyllanthionine (Thr-Cys)) is located at residues 75 to 85; that stretch reads TAGCYGGTKMC. The beta-methyllanthionine (Cys-Thr) cross-link spans 78 to 82; that stretch reads CYGGT.

In terms of processing, cross-links are proved in vitro, when coepressed in E.coli with the ProcM lanthionine synthetase. Post-translationally, the beta-methyllanthionine residues have a DL configuration (with 2S,3S,6R stereochemistry). Maturation of prochlorosin involves the enzymatic conversion of Thr, and Ser into dehydrated AA and the formation of thioether bonds with cysteines. This is followed by membrane translocation and cleavage of the modified precursor.

It localises to the secreted. Its function is as follows. Lanthionine-containing peptide (lantipeptide) with unknown function. Does not show antibiotic activity against Lactococcus lactis 117 and Bacillus subtilis 6633 bacteria. Organisms that produce this peptide live in oligotrophic environments at very dilute concentrations, suggesting this peptide is not secreted to influence other bacteria. This chain is Lantipeptide prochlorosin 3.3, found in Prochlorococcus marinus (strain MIT 9313).